Reading from the N-terminus, the 199-residue chain is Peroxiredoxin 2 (199 aa).

The region spanning 1-152 (MGQKAPDFTV…IIRVIKALQF (152 aa)) is the Thioredoxin domain. Cysteine 40 functions as the Cysteine sulfenic acid (-SOH) intermediate in the catalytic mechanism. Residue arginine 115 participates in substrate binding.

The protein belongs to the peroxiredoxin family. Prx6 subfamily. In terms of assembly, homodecamer. Pentamer of dimers that assemble into a ring structure.

Its subcellular location is the cytoplasm. The enzyme catalyses a hydroperoxide + [thioredoxin]-dithiol = an alcohol + [thioredoxin]-disulfide + H2O. In terms of biological role, thiol-specific peroxidase that catalyzes the reduction of hydrogen peroxide and organic hydroperoxides to water and alcohols, respectively. Plays a role in cell protection against oxidative stress by detoxifying peroxides. In Thermoplasma acidophilum (strain ATCC 25905 / DSM 1728 / JCM 9062 / NBRC 15155 / AMRC-C165), this protein is Peroxiredoxin 2.